The sequence spans 511 residues: D-alanine--D-alanyl carrier protein ligase (511 aa).

ATP is bound at residue 152-153 (TS). Asp199 serves as a coordination point for D-alanine. Position 294-299 (294-299 (NAYGPT)) interacts with ATP. Val303 lines the D-alanine pocket. Residues Asp385, 397-400 (YGGR), and Lys499 contribute to the ATP site. D-alanine is bound at residue Lys499.

This sequence belongs to the ATP-dependent AMP-binding enzyme family. DltA subfamily.

The protein resides in the cytoplasm. It carries out the reaction holo-[D-alanyl-carrier protein] + D-alanine + ATP = D-alanyl-[D-alanyl-carrier protein] + AMP + diphosphate. It functions in the pathway cell wall biogenesis; lipoteichoic acid biosynthesis. Functionally, catalyzes the first step in the D-alanylation of lipoteichoic acid (LTA), the activation of D-alanine and its transfer onto the D-alanyl carrier protein (Dcp) DltC. In an ATP-dependent two-step reaction, forms a high energy D-alanyl-AMP intermediate, followed by transfer of the D-alanyl residue as a thiol ester to the phosphopantheinyl prosthetic group of the Dcp. D-alanylation of LTA plays an important role in modulating the properties of the cell wall in Gram-positive bacteria, influencing the net charge of the cell wall. This Streptococcus agalactiae serotype III (strain NEM316) protein is D-alanine--D-alanyl carrier protein ligase.